The primary structure comprises 951 residues: Serine/threonine-protein phosphatase 4 regulatory subunit 1 (951 aa).

7 HEAT repeats span residues Glu-26–Arg-63, Arg-82–Glu-119, Ala-127–Ile-164, Asp-168–Lys-206, Ile-208–Gln-246, Ala-248–Gln-285, and Ile-287–Asn-324. Disordered regions lie at residues Ser-326–Val-395, Ser-407–Arg-501, His-539–Glu-569, and Gly-592–Pro-612. 3 stretches are compositionally biased toward basic and acidic residues: residues Phe-332–Asp-360, Asp-464–Gly-483, and His-539–Leu-551. One copy of the HEAT 8 repeat lies at Lys-502–His-539. The segment covering Ala-594–Phe-604 has biased composition (gly residues). HEAT repeat units lie at residues Leu-699–Ile-735, Arg-777–Met-815, Thr-820–Leu-858, and Gln-862–Tyr-899. Ser-936 is subject to Phosphoserine.

In terms of assembly, serine/threonine-protein phosphatase 4 (PP4) occurs in different assemblies of the catalytic and one or more regulatory subunits. Component of the PP4 complex PPP4C-PPP4R1. Interacts with HDAC3.

Regulatory subunit of serine/threonine-protein phosphatase 4. May play a role in regulation of cell division in renal glomeruli. The PPP4C-PPP4R1 PP4 complex may play a role in dephosphorylation and regulation of HDAC3. Plays a role in the inhibition of TNF-induced NF-kappa-B activation by regulating the dephosphorylation of TRAF2. In Rattus norvegicus (Rat), this protein is Serine/threonine-protein phosphatase 4 regulatory subunit 1 (Ppp4r1).